Consider the following 360-residue polypeptide: Photosystem II protein D1 (360 aa).

3 consecutive transmembrane segments (helical) span residues 29-46, 118-133, and 142-156; these read YVGW…TATT, QFLI…QWEL, and WICV…ARTA. Pheophytin a is bound at residue tyrosine 126. [CaMn4O5] cluster contacts are provided by aspartate 170 and glutamate 189. Residues 197–218 traverse the membrane as a helical segment; it reads FHMLGVAGVFGGSLFSAMHGSL. Residue histidine 198 coordinates chlorophyll a. A quinone is bound by residues histidine 215 and 264-265; that span reads SF. A Fe cation-binding site is contributed by histidine 215. Histidine 272 contacts Fe cation. A helical membrane pass occupies residues 274–288; sequence FLGAWPVIGIWFTAM. [CaMn4O5] cluster-binding residues include histidine 332, glutamate 333, aspartate 342, and alanine 344. The propeptide occupies 345–360; it reads SGEQAPVALTAPAING.

This sequence belongs to the reaction center PufL/M/PsbA/D family. PSII is composed of 1 copy each of membrane proteins PsbA, PsbB, PsbC, PsbD, PsbE, PsbF, PsbH, PsbI, PsbJ, PsbK, PsbL, PsbM, PsbT, PsbX, PsbY, PsbZ, Psb30/Ycf12, peripheral proteins PsbO, CyanoQ (PsbQ), PsbU, PsbV and a large number of cofactors. It forms dimeric complexes. Requires The D1/D2 heterodimer binds P680, chlorophylls that are the primary electron donor of PSII, and subsequent electron acceptors. It shares a non-heme iron and each subunit binds pheophytin, quinone, additional chlorophylls, carotenoids and lipids. D1 provides most of the ligands for the Mn4-Ca-O5 cluster of the oxygen-evolving complex (OEC). There is also a Cl(-1) ion associated with D1 and D2, which is required for oxygen evolution. The PSII complex binds additional chlorophylls, carotenoids and specific lipids. as cofactor. Post-translationally, tyr-161 forms a radical intermediate that is referred to as redox-active TyrZ, YZ or Y-Z. C-terminally processed by CtpA; processing is essential to allow assembly of the oxygen-evolving complex and thus photosynthetic growth.

It localises to the cellular thylakoid membrane. The catalysed reaction is 2 a plastoquinone + 4 hnu + 2 H2O = 2 a plastoquinol + O2. Functionally, photosystem II (PSII) is a light-driven water:plastoquinone oxidoreductase that uses light energy to abstract electrons from H(2)O, generating O(2) and a proton gradient subsequently used for ATP formation. It consists of a core antenna complex that captures photons, and an electron transfer chain that converts photonic excitation into a charge separation. The D1/D2 (PsbA/PsbD) reaction center heterodimer binds P680, the primary electron donor of PSII as well as several subsequent electron acceptors. This Synechocystis sp. (strain PCC 6714) (Aphanocapsa sp. (strain PCC 6714)) protein is Photosystem II protein D1.